The sequence spans 115 residues: Holo-[acyl-carrier-protein] synthase (115 aa).

Positions 6 and 51 each coordinate Mg(2+).

This sequence belongs to the P-Pant transferase superfamily. AcpS family. It depends on Mg(2+) as a cofactor.

Its subcellular location is the cytoplasm. It catalyses the reaction apo-[ACP] + CoA = holo-[ACP] + adenosine 3',5'-bisphosphate + H(+). Transfers the 4'-phosphopantetheine moiety from coenzyme A to a Ser of acyl-carrier-protein. The sequence is that of Holo-[acyl-carrier-protein] synthase from Campylobacter jejuni (strain RM1221).